A 204-amino-acid chain; its full sequence is Urease accessory protein UreG (204 aa).

13–20 (GPVGSGKT) is a GTP binding site.

The protein belongs to the SIMIBI class G3E GTPase family. UreG subfamily. Homodimer. UreD, UreF and UreG form a complex that acts as a GTP-hydrolysis-dependent molecular chaperone, activating the urease apoprotein by helping to assemble the nickel containing metallocenter of UreC. The UreE protein probably delivers the nickel.

The protein localises to the cytoplasm. Functionally, facilitates the functional incorporation of the urease nickel metallocenter. This process requires GTP hydrolysis, probably effectuated by UreG. The sequence is that of Urease accessory protein UreG from Acinetobacter baumannii (strain AB307-0294).